A 587-amino-acid chain; its full sequence is Arginine--tRNA ligase (587 aa).

The short motif at 127-137 (PNLAKEMHVGH) is the 'HIGH' region element.

It belongs to the class-I aminoacyl-tRNA synthetase family. In terms of assembly, monomer.

It localises to the cytoplasm. It carries out the reaction tRNA(Arg) + L-arginine + ATP = L-arginyl-tRNA(Arg) + AMP + diphosphate. The chain is Arginine--tRNA ligase from Pseudomonas paraeruginosa (strain DSM 24068 / PA7) (Pseudomonas aeruginosa (strain PA7)).